The primary structure comprises 120 residues: SPbeta prophage-derived DSR anti-defense 1 (120 aa).

It belongs to the DSR anti-defense 1 family. Interacts with Bacillus subtilis DSR2 (via C-terminus) in a 2:4 ratio; this interaction leads to the absence of activation of the NADase defense activity of DSR2.

In terms of biological role, counteracts the defense-associated sirtuin 2 (DSR2) defense system of the host. Inhibits the NADase activity of host DSR2 by competing with the tail tube protein that normally activates DSR2. The polypeptide is SPbeta prophage-derived DSR anti-defense 1 (yotI) (Bacillus subtilis (strain 168)).